Consider the following 973-residue polypeptide: FHF complex subunit HOOK-interacting protein 1B (973 aa).

Disordered regions lie at residues S466 to V493, S510 to L547, and S573 to K647. Position 467 is a phosphoserine (S467). The segment covering S482–V493 has biased composition (low complexity). 4 positions are modified to phosphoserine: S510, S523, S529, and S533. Composition is skewed to low complexity over residues S529 to P538 and G622 to P639. Phosphoserine is present on residues S859 and S898.

This sequence belongs to the FHIP family. Component of the FTS/Hook/FHIP complex (FHF complex), composed of AKTIP/FTS, FHIP1B, and one or more members of the Hook family of proteins HOOK1, HOOK2, and HOOK3. The FHF complex associates with the homotypic vesicular sorting complex (the HOPS complex).

Functionally, component of the FTS/Hook/FHIP complex (FHF complex). The FHF complex may function to promote vesicle trafficking and/or fusion via the homotypic vesicular protein sorting complex (the HOPS complex). FHF complex promotes the distribution of AP-4 complex to the perinuclear area of the cell. In Bos taurus (Bovine), this protein is FHF complex subunit HOOK-interacting protein 1B (FHIP1B).